Consider the following 84-residue polypeptide: Small ribosomal subunit protein bS16 (84 aa).

It belongs to the bacterial ribosomal protein bS16 family.

This chain is Small ribosomal subunit protein bS16, found in Cupriavidus necator (strain ATCC 17699 / DSM 428 / KCTC 22496 / NCIMB 10442 / H16 / Stanier 337) (Ralstonia eutropha).